A 492-amino-acid chain; its full sequence is Putative cytochrome P450 136 (492 aa).

Cys-439 provides a ligand contact to heme.

Belongs to the cytochrome P450 family. It depends on heme as a cofactor.

This is Putative cytochrome P450 136 (cyp136) from Mycobacterium tuberculosis (strain CDC 1551 / Oshkosh).